Here is a 271-residue protein sequence, read N- to C-terminus: 3-deoxy-manno-octulosonate cytidylyltransferase (271 aa).

The protein belongs to the KdsB family.

The protein localises to the cytoplasm. It catalyses the reaction 3-deoxy-alpha-D-manno-oct-2-ulosonate + CTP = CMP-3-deoxy-beta-D-manno-octulosonate + diphosphate. Its pathway is nucleotide-sugar biosynthesis; CMP-3-deoxy-D-manno-octulosonate biosynthesis; CMP-3-deoxy-D-manno-octulosonate from 3-deoxy-D-manno-octulosonate and CTP: step 1/1. It participates in bacterial outer membrane biogenesis; lipopolysaccharide biosynthesis. Functionally, activates KDO (a required 8-carbon sugar) for incorporation into bacterial lipopolysaccharide in Gram-negative bacteria. The sequence is that of 3-deoxy-manno-octulosonate cytidylyltransferase from Leptothrix cholodnii (strain ATCC 51168 / LMG 8142 / SP-6) (Leptothrix discophora (strain SP-6)).